Consider the following 486-residue polypeptide: Glutamyl-tRNA(Gln) amidotransferase subunit A (486 aa).

Catalysis depends on charge relay system residues lysine 75 and serine 150. The active-site Acyl-ester intermediate is serine 174.

It belongs to the amidase family. GatA subfamily. As to quaternary structure, heterotrimer of A, B and C subunits.

The enzyme catalyses L-glutamyl-tRNA(Gln) + L-glutamine + ATP + H2O = L-glutaminyl-tRNA(Gln) + L-glutamate + ADP + phosphate + H(+). Allows the formation of correctly charged Gln-tRNA(Gln) through the transamidation of misacylated Glu-tRNA(Gln) in organisms which lack glutaminyl-tRNA synthetase. The reaction takes place in the presence of glutamine and ATP through an activated gamma-phospho-Glu-tRNA(Gln). This chain is Glutamyl-tRNA(Gln) amidotransferase subunit A, found in Trichormus variabilis (strain ATCC 29413 / PCC 7937) (Anabaena variabilis).